The chain runs to 165 residues: Large ribosomal subunit protein uL10 (165 aa).

It belongs to the universal ribosomal protein uL10 family. In terms of assembly, part of the ribosomal stalk of the 50S ribosomal subunit. The N-terminus interacts with L11 and the large rRNA to form the base of the stalk. The C-terminus forms an elongated spine to which L12 dimers bind in a sequential fashion forming a multimeric L10(L12)X complex.

Its function is as follows. Forms part of the ribosomal stalk, playing a central role in the interaction of the ribosome with GTP-bound translation factors. The polypeptide is Large ribosomal subunit protein uL10 (Deinococcus deserti (strain DSM 17065 / CIP 109153 / LMG 22923 / VCD115)).